The following is a 206-amino-acid chain: Imidazoleglycerol-phosphate dehydratase (206 aa).

Belongs to the imidazoleglycerol-phosphate dehydratase family.

It localises to the cytoplasm. The enzyme catalyses D-erythro-1-(imidazol-4-yl)glycerol 3-phosphate = 3-(imidazol-4-yl)-2-oxopropyl phosphate + H2O. It functions in the pathway amino-acid biosynthesis; L-histidine biosynthesis; L-histidine from 5-phospho-alpha-D-ribose 1-diphosphate: step 6/9. This Saccharopolyspora erythraea (strain ATCC 11635 / DSM 40517 / JCM 4748 / NBRC 13426 / NCIMB 8594 / NRRL 2338) protein is Imidazoleglycerol-phosphate dehydratase.